The following is a 482-amino-acid chain: MADTQTPNLQNTAEGDANTSAENERSLTVRANHQSQNTRSWLRYPFLVAGIALFLGPFSFFWPREGPIDSKDYVERTKRVLKTTPLIDGHNDLPWQLRIELHNRIYDGRVDLSKKLLGHTDIQRMRQGMVGGQFWSVYVDCDTQQQHFEDPSWVVRDTLEQIDVTRRFVNEHPEHLQYCDTPACAREAFKSGRISSMIGIEGGHQVGGSIGAIRQMFNLGARYITLTHNCDNAFGTSASTVAAGGADQGLFKLGYDAVKEMNRLGMMVDLSHVSHQTMRDVLGVTRAPVIFSHSGAYAVEPHLRHAPDDVLRLVKQNGGIVMAVFVNRFLNMKNPDQATIHDVVDHILHIAEVCGWECVGIGSDFSGTPFVPVGLEDVSKFPDLIQLLMERGATDQQIRLLAGENILRVWGKIEQRAKELQAGGEKPIEAEYEGRNWHKGMKNSPWMLRRSRDEALVNGAADQPFMFNVDSEGKHNPVVKQV.

Positions 1–21 (MADTQTPNLQNTAEGDANTSA) are enriched in polar residues. The disordered stretch occupies residues 1-24 (MADTQTPNLQNTAEGDANTSAENE). N-linked (GlcNAc...) asparagine glycosylation occurs at asparagine 18. A helical membrane pass occupies residues 41-61 (WLRYPFLVAGIALFLGPFSFF). Residues histidine 90, aspartate 92, and glutamate 201 each contribute to the Zn(2+) site. Cysteines 141 and 230 form a disulfide. Histidine 228 provides a ligand contact to substrate. Positions 272 and 293 each coordinate Zn(2+). Substrate is bound by residues arginine 304 and aspartate 364.

This sequence belongs to the metallo-dependent hydrolases superfamily. Peptidase M19 family. It depends on Zn(2+) as a cofactor.

Its subcellular location is the membrane. The enzyme catalyses an L-aminoacyl-L-amino acid + H2O = 2 an L-alpha-amino acid. In terms of biological role, hydrolyzes a wide range of dipeptides. The chain is Putative dipeptidase NECHADRAFT_87110 from Fusarium vanettenii (strain ATCC MYA-4622 / CBS 123669 / FGSC 9596 / NRRL 45880 / 77-13-4) (Fusarium solani subsp. pisi).